Here is a 96-residue protein sequence, read N- to C-terminus: DNA-directed RNA polymerase subunit Rpo11 (96 aa).

Belongs to the archaeal Rpo11/eukaryotic RPB11/RPC19 RNA polymerase subunit family. Part of the RNA polymerase complex.

Its subcellular location is the cytoplasm. The enzyme catalyses RNA(n) + a ribonucleoside 5'-triphosphate = RNA(n+1) + diphosphate. Functionally, DNA-dependent RNA polymerase (RNAP) catalyzes the transcription of DNA into RNA using the four ribonucleoside triphosphates as substrates. The sequence is that of DNA-directed RNA polymerase subunit Rpo11 from Methanococcus maripaludis (strain DSM 14266 / JCM 13030 / NBRC 101832 / S2 / LL).